Consider the following 222-residue polypeptide: Ribosomal RNA small subunit methyltransferase I (222 aa).

It belongs to the methyltransferase superfamily. RsmI family.

The protein localises to the cytoplasm. The enzyme catalyses cytidine(1402) in 16S rRNA + S-adenosyl-L-methionine = 2'-O-methylcytidine(1402) in 16S rRNA + S-adenosyl-L-homocysteine + H(+). Catalyzes the 2'-O-methylation of the ribose of cytidine 1402 (C1402) in 16S rRNA. In Mycoplasmopsis pulmonis (strain UAB CTIP) (Mycoplasma pulmonis), this protein is Ribosomal RNA small subunit methyltransferase I.